We begin with the raw amino-acid sequence, 312 residues long: Ribosomal protein L11 methyltransferase (312 aa).

S-adenosyl-L-methionine contacts are provided by Thr160, Gly181, Asp203, and Asn246.

Belongs to the methyltransferase superfamily. PrmA family.

Its subcellular location is the cytoplasm. The catalysed reaction is L-lysyl-[protein] + 3 S-adenosyl-L-methionine = N(6),N(6),N(6)-trimethyl-L-lysyl-[protein] + 3 S-adenosyl-L-homocysteine + 3 H(+). Methylates ribosomal protein L11. This is Ribosomal protein L11 methyltransferase from Staphylococcus aureus (strain USA300).